A 201-amino-acid chain; its full sequence is MANKGPSYGMSREVQSKIEKKYDEELEERLVEWIIVQCGPDVGRPDRGRLGFQVWLKNGVILSKLVNSLYPDGSKPVKVPENPPSMVFKQMEQVAQFLKAAEDYGVIKTDMFQTVDLFEGKDMAAVQRTLMALGSLAVTKNDGHYRGDPNWFMKKAQEHKREFTESQLQEGKHVIGLQMGSNRGASQAGMTGYGRPRQIIS.

Ala2 carries the N-acetylalanine modification. One can recognise a Calponin-homology (CH) domain in the interval 24–137 (EELEERLVEW…RTLMALGSLA (114 aa)). The residue at position 166 (Ser166) is a Phosphoserine. Residue Lys172 is modified to N6-acetyllysine. The stretch at 175 to 200 (IGLQMGSNRGASQAGMTGYGRPRQII) is one Calponin-like repeat. The residue at position 181 (Ser181) is a Phosphoserine. Arg183 bears the Omega-N-methylarginine mark.

This sequence belongs to the calponin family.

The protein localises to the cytoplasm. Its function is as follows. Actin cross-linking/gelling protein. Involved in calcium interactions and contractile properties of the cell that may contribute to replicative senescence. This chain is Transgelin (TAGLN), found in Homo sapiens (Human).